The sequence spans 300 residues: Cation-efflux pump FieF (300 aa).

4 helical membrane-spanning segments follow: residues A12–W32, I39–V59, A82–I102, and P114–F134. D45 and D49 together coordinate Zn(2+). Positions 153 and 157 each coordinate Zn(2+). The chain crosses the membrane as a helical span at residues I164 to L184.

It belongs to the cation diffusion facilitator (CDF) transporter (TC 2.A.4) family. FieF subfamily. Homodimer.

The protein resides in the cell inner membrane. The enzyme catalyses Zn(2+)(in) + H(+)(out) = Zn(2+)(out) + H(+)(in). It catalyses the reaction Cd(2+)(in) + H(+)(out) = Cd(2+)(out) + H(+)(in). The catalysed reaction is Fe(2+)(in) + H(+)(out) = Fe(2+)(out) + H(+)(in). Its function is as follows. Divalent metal cation transporter which exports Zn(2+), Cd(2+) and possibly Fe(2+). May be involved in zinc and iron detoxification by efflux. The chain is Cation-efflux pump FieF from Citrobacter koseri (strain ATCC BAA-895 / CDC 4225-83 / SGSC4696).